The chain runs to 688 residues: DNA ligase (688 aa).

NAD(+)-binding positions include 42–46 (DAEYD), 91–92 (SL), and glutamate 128. Catalysis depends on lysine 130, which acts as the N6-AMP-lysine intermediate. Positions 151, 188, 305, and 329 each coordinate NAD(+). The Zn(2+) site is built by cysteine 423, cysteine 426, cysteine 441, and cysteine 447. The BRCT domain maps to 608–688 (APQGVLAGKT…GMRKLLEGQL (81 aa)).

It belongs to the NAD-dependent DNA ligase family. LigA subfamily. Mg(2+) serves as cofactor. The cofactor is Mn(2+).

It carries out the reaction NAD(+) + (deoxyribonucleotide)n-3'-hydroxyl + 5'-phospho-(deoxyribonucleotide)m = (deoxyribonucleotide)n+m + AMP + beta-nicotinamide D-nucleotide.. DNA ligase that catalyzes the formation of phosphodiester linkages between 5'-phosphoryl and 3'-hydroxyl groups in double-stranded DNA using NAD as a coenzyme and as the energy source for the reaction. It is essential for DNA replication and repair of damaged DNA. The polypeptide is DNA ligase (Paraburkholderia xenovorans (strain LB400)).